The primary structure comprises 353 residues: MRVADFSFALPDNLIARYPQAQRSACRLLSLDGQTGALAHQVFTDLLEELAPGDLLVFNNTRVIPARLFGRKVSGGKIEVLVERVLDDKRVLAHVRASKAPKPGSALLLGDDDSIAATMVARHDALFELRFDDARDVLTLLNDAGHMPLPPYIDRPDDVADRELYQTVYGERPGSVAAPTAGLHFDEPLLAALRAKGVEMAFVTLHVGAGTFQPVRVDQIEHHQMHSEYAEVPQEVVDAVLACKARGNRVVAVGTTAVRSLESAAAAGEQALTPFFGDTSIFIYTGYQFRVVDVLITNFHLPESTLIMLVSAFAGYRHTLAAYREAVAQAYRFFSYGDAMFITRNPAAAAERG.

Belongs to the QueA family. In terms of assembly, monomer.

It localises to the cytoplasm. The catalysed reaction is 7-aminomethyl-7-carbaguanosine(34) in tRNA + S-adenosyl-L-methionine = epoxyqueuosine(34) in tRNA + adenine + L-methionine + 2 H(+). Its pathway is tRNA modification; tRNA-queuosine biosynthesis. Transfers and isomerizes the ribose moiety from AdoMet to the 7-aminomethyl group of 7-deazaguanine (preQ1-tRNA) to give epoxyqueuosine (oQ-tRNA). This is S-adenosylmethionine:tRNA ribosyltransferase-isomerase from Sodalis glossinidius (strain morsitans).